Consider the following 367-residue polypeptide: MTAHRDAIRTARSLVVKVGTNALTTPAGVFDAGRLAGLADAIEARMKAGTDVVIVSSGAIAAGIEPLGLSRRPRDLATKQAAASVGQVALVNSWSAAFARYGRTVGQVLLSAHDISMRAQHTNAQRTLDRLRALHAVAIVNENDTVATNEIRFGDNDRLSALVAHLVGAEALVLLSDIDGLYDSDPRKTKGAKFIPEVTGAEDLAGVVAGPGSDLGTGGMTSKMSSALLAADAGVPVLLAAAADAASALTDASVGTVFAARPVRMSARRFWVRYAAEAAGALTLDEGAVRAVVHQRRSLLPAGITAVSGRFYAGDVVELRGPDAVPVARGVVAYDATELATMMGRSTSELPGELRRPAVHADDLVAV.

Residue Lys17 coordinates ATP. Positions 57, 144, and 156 each coordinate substrate. ATP is bound by residues 176–177 (SD) and 217–223 (TGGMTSK). A PUA domain is found at 279–357 (AGALTLDEGA…SELPGELRRP (79 aa)).

It belongs to the glutamate 5-kinase family.

It localises to the cytoplasm. The enzyme catalyses L-glutamate + ATP = L-glutamyl 5-phosphate + ADP. It participates in amino-acid biosynthesis; L-proline biosynthesis; L-glutamate 5-semialdehyde from L-glutamate: step 1/2. Functionally, catalyzes the transfer of a phosphate group to glutamate to form L-glutamate 5-phosphate. The protein is Glutamate 5-kinase of Mycobacterium avium (strain 104).